The chain runs to 339 residues: Serine/threonine-protein kinase SRK2J (339 aa).

Residues 4-260 form the Protein kinase domain; that stretch reads YEMVKDLGFG…LKEIKSHAWF (257 aa). ATP contacts are provided by residues 10–18 and K33; that span reads LGFGNFGLA. D123 (proton acceptor) is an active-site residue. The interval 308 to 339 is disordered; sequence SRPVESLGSDKKDDDEEEYLDANDEEWYDDYA. A compositionally biased stretch (acidic residues) spans 320–339; sequence DDDEEEYLDANDEEWYDDYA.

The protein belongs to the protein kinase superfamily. Ser/Thr protein kinase family. Expressed in seedlings.

It catalyses the reaction L-seryl-[protein] + ATP = O-phospho-L-seryl-[protein] + ADP + H(+). The catalysed reaction is L-threonyl-[protein] + ATP = O-phospho-L-threonyl-[protein] + ADP + H(+). This is Serine/threonine-protein kinase SRK2J (SRK2J) from Arabidopsis thaliana (Mouse-ear cress).